The following is a 299-amino-acid chain: Spermatocyte protein spe-11 (299 aa).

A disordered region spans residues 1 to 38 (MSDEEIDISTALNNKTTPKKKSLKRNSNSQEGYESPEE).

As to expression, expressed in mature sperm.

It localises to the cytoplasm. Its subcellular location is the perinuclear region. Its function is as follows. Paternally sperm-supplied factor required for embryogenesis. Plays a role in preventing polyspermy possibly by promoting the formation of a continuous and cohesive eggshell chitin layer. This is Spermatocyte protein spe-11 (spe-11) from Caenorhabditis elegans.